The following is a 210-amino-acid chain: Na(+)-translocating NADH-quinone reductase subunit D (210 aa).

5 helical membrane-spanning segments follow: residues 42-62, 72-92, 103-123, 131-151, and 178-198; these read FVMTLAVTFVTALSNFSVSLI, IIVQMAIIASLVIVVDQVLKA, VFVGLIITNCIVMGRAEAFAM, LIDGIGNGLGYGFVLITVGFF, and NGLMLLAPSAFFLIGFLIWVI.

It belongs to the NqrDE/RnfAE family. Composed of six subunits; NqrA, NqrB, NqrC, NqrD, NqrE and NqrF.

It localises to the cell inner membrane. The catalysed reaction is a ubiquinone + n Na(+)(in) + NADH + H(+) = a ubiquinol + n Na(+)(out) + NAD(+). Its function is as follows. NQR complex catalyzes the reduction of ubiquinone-1 to ubiquinol by two successive reactions, coupled with the transport of Na(+) ions from the cytoplasm to the periplasm. NqrA to NqrE are probably involved in the second step, the conversion of ubisemiquinone to ubiquinol. In Vibrio parahaemolyticus serotype O3:K6 (strain RIMD 2210633), this protein is Na(+)-translocating NADH-quinone reductase subunit D.